Here is a 402-residue protein sequence, read N- to C-terminus: UPF0261 protein BPP1817 (402 aa).

Belongs to the UPF0261 family.

This is UPF0261 protein BPP1817 from Bordetella parapertussis (strain 12822 / ATCC BAA-587 / NCTC 13253).